Here is a 69-residue protein sequence, read N- to C-terminus: NAD(P)H-quinone oxidoreductase subunit O (69 aa).

It belongs to the complex I NdhO subunit family. NDH-1 can be composed of about 15 different subunits; different subcomplexes with different compositions have been identified which probably have different functions.

The protein resides in the cellular thylakoid membrane. The catalysed reaction is a plastoquinone + NADH + (n+1) H(+)(in) = a plastoquinol + NAD(+) + n H(+)(out). The enzyme catalyses a plastoquinone + NADPH + (n+1) H(+)(in) = a plastoquinol + NADP(+) + n H(+)(out). Functionally, NDH-1 shuttles electrons from an unknown electron donor, via FMN and iron-sulfur (Fe-S) centers, to quinones in the respiratory and/or the photosynthetic chain. The immediate electron acceptor for the enzyme in this species is believed to be plastoquinone. Couples the redox reaction to proton translocation, and thus conserves the redox energy in a proton gradient. Cyanobacterial NDH-1 also plays a role in inorganic carbon-concentration. This Acaryochloris marina (strain MBIC 11017) protein is NAD(P)H-quinone oxidoreductase subunit O.